The sequence spans 527 residues: Catalase (527 aa).

The span at 1 to 22 (MADNRDPASDQMKHWKEQRAAQ) shows a compositional bias: basic and acidic residues. The tract at residues 1-32 (MADNRDPASDQMKHWKEQRAAQKPDILTTGSG) is disordered. N-acetylalanine is present on alanine 2. The residue at position 9 (serine 9) is a Phosphoserine. Position 13 is an N6-succinyllysine (lysine 13). Active-site residues include histidine 75 and asparagine 148. Residues histidine 194, serine 201, arginine 203, and asparagine 213 each contribute to the NADP(+) site. Residue lysine 221 is modified to N6-succinyllysine. N6-acetyllysine is present on lysine 233. Lysine 237, tryptophan 303, and histidine 305 together coordinate NADP(+). Tyrosine 358 provides a ligand contact to heme. Phosphoserine occurs at positions 417 and 434. Lysine 480 bears the N6-acetyllysine; alternate mark. At lysine 480 the chain carries N6-succinyllysine; alternate. The residue at position 499 (lysine 499) is an N6-acetyllysine. Threonine 511 bears the Phosphothreonine mark. Position 517 is a phosphoserine (serine 517). The short motif at 524–527 (KANL) is the Microbody targeting signal; atypical element.

Belongs to the catalase family. As to quaternary structure, homotetramer. Interacts (via microbody targeting signal) with PEX5, monomeric form interacts with PEX5, leading to its translocation into peroxisomes. Heme serves as cofactor. The cofactor is NADP(+).

The protein localises to the peroxisome matrix. The catalysed reaction is 2 H2O2 = O2 + 2 H2O. Its function is as follows. Catalyzes the degradation of hydrogen peroxide (H(2)O(2)) generated by peroxisomal oxidases to water and oxygen, thereby protecting cells from the toxic effects of hydrogen peroxide. Promotes growth of cells including T-cells, B-cells, myeloid leukemia cells, melanoma cells, mastocytoma cells and normal and transformed fibroblast cells. The chain is Catalase (CAT) from Sus scrofa (Pig).